The following is a 124-amino-acid chain: Fluoride-specific ion channel FluC (124 aa).

4 helical membrane passes run 5–27 (LFVA…LMLQ), 42–62 (ILGS…EVSP), 63–83 (EIKA…STFS), and 95–115 (LVKA…VVYL). The Na(+) site is built by Gly74 and Thr77.

The protein belongs to the fluoride channel Fluc/FEX (TC 1.A.43) family.

The protein localises to the cell inner membrane. The catalysed reaction is fluoride(in) = fluoride(out). Na(+) is not transported, but it plays an essential structural role and its presence is essential for fluoride channel function. Fluoride-specific ion channel. Important for reducing fluoride concentration in the cell, thus reducing its toxicity. The polypeptide is Fluoride-specific ion channel FluC (Shewanella piezotolerans (strain WP3 / JCM 13877)).